We begin with the raw amino-acid sequence, 344 residues long: Meiotic recombination protein DMC1 homolog A (344 aa).

Residue 133-140 (GEFRSGKT) participates in ATP binding. Residue R235 coordinates dsDNA. Positions 235, 238, 241, 247, and 315 each coordinate ssDNA. DsDNA-binding residues include R241 and R247.

This sequence belongs to the RecA family. DMC1 subfamily. Expressed in pollen mother cells and root tips.

It is found in the nucleus. Recombinase that may participate in meiotic recombination, specifically in homologous strand assimilation, which is required for the resolution of meiotic double-strand breaks. Exhibits DNA-dependent ATPase activity when bound to single-stranded DNA (ssDNA). Mediates renaturation of homologous complementary strands as well as assimilation of single strands into homologous supercoiled duplexes leading to D-loop formation. Binds circular single-stranded DNA (ssDNA) and circular double-stranded DNA (dsDNA) in vitro. Catalyzes DNA homologous renaturation and DNA strand exchange. The rates of these activities are dependent on the state of ATP hydrolysis. Forms helical filaments along ssDNA and dsDNA, and promotes strand exchange between ssDNA and dsDNA with long DNA substrates of several thousand base pairs. The presence of the replication protein A is not required for this activity. Seems to be required for homologous pairing and subsequent chromosome segregation during male meiosis. May be not directly required for homologous pairing during male meiosis. Required for synaptonemal complex assembly and crossover formation. Functions redundantly with DMC1B. The protein is Meiotic recombination protein DMC1 homolog A of Oryza sativa subsp. indica (Rice).